Consider the following 336-residue polypeptide: NADH-cytochrome b5 reductase 2 (336 aa).

Residues 28-50 (GGSSNGALYVGIGAAGLAGAYIY) form a helical membrane-spanning segment. Residues 84–189 (QGFISLLLDK…KGPIPKYPWS (106 aa)) enclose the FAD-binding FR-type domain. Residue 192-227 (KHEHIALIAGGTGITPMWQTARAIFKNPEDKTKVTL) participates in FAD binding.

This sequence belongs to the flavoprotein pyridine nucleotide cytochrome reductase family. FAD serves as cofactor.

The protein localises to the mitochondrion outer membrane. It catalyses the reaction 2 Fe(III)-[cytochrome b5] + NADH = 2 Fe(II)-[cytochrome b5] + NAD(+) + H(+). Functionally, may mediate the reduction of outer membrane cytochrome b5. The chain is NADH-cytochrome b5 reductase 2 (MCR1) from Phaeosphaeria nodorum (strain SN15 / ATCC MYA-4574 / FGSC 10173) (Glume blotch fungus).